Reading from the N-terminus, the 276-residue chain is Ribosomal RNA large subunit methyltransferase E (276 aa).

Gly52, Phe54, Asp72, Asp90, and Asp114 together coordinate S-adenosyl-L-methionine. The active-site Proton acceptor is the Lys154. The segment covering 203-249 (RAAPTANATPTPTSTSTSTPTSTSTPTSTSTSTPAPTLTQTQTQTPK) has biased composition (low complexity). The interval 203–276 (RAAPTANATP…AKTGASRRTR (74 aa)) is disordered. The segment covering 265 to 276 (AKAKTGASRRTR) has biased composition (basic residues).

The protein belongs to the class I-like SAM-binding methyltransferase superfamily. RNA methyltransferase RlmE family.

It is found in the cytoplasm. The catalysed reaction is uridine(2552) in 23S rRNA + S-adenosyl-L-methionine = 2'-O-methyluridine(2552) in 23S rRNA + S-adenosyl-L-homocysteine + H(+). Its function is as follows. Specifically methylates the uridine in position 2552 of 23S rRNA at the 2'-O position of the ribose in the fully assembled 50S ribosomal subunit. The protein is Ribosomal RNA large subunit methyltransferase E of Anaeromyxobacter sp. (strain Fw109-5).